We begin with the raw amino-acid sequence, 586 residues long: MCGILAVLGVVEVSLAKRSRIIELSRRLRHRGPDWSGLHCHEDCYLAHQRLAIIDPTSGDQPLYNEDKTVVVTVNGEIYNHEELKAKLKTHEFQTGSDCEVIAHLYEEYGEEFVDMLDGMFSFVLLDTRDKSFIAARDAIGICPLYMGWGLDGSVWFSSEMKALSDDCERFITFPPGHLYSSKTGGLRRWYNPPWFSETVPSTPYNALFLREMFEKAVIKRLMTDVPFGVLLSGGLDSSLVASVASRHLNETKVDRQWGNKLHTFCIGLKGSPDLKAAREVADYLSTVHHEFHFTVQEGIDALEEVIYHIETYDVTTIRASTPMFLMSRKIKSLGVKMVISGEGSDEIFGGYLYFHKAPNKKEFLEETCRKIKALHLYDCLRANKATSAWGVEARVPFLDKSFISVAMDIDPEWNMIKRDLGRIEKWVMRKAFDDDEHPYLPKHILYRQKEQFSDGVGYNWIDGLKSFTEQQVTDEMMNNAAQMFPYNTPVNKEAYYYRMIFERLFPQDSARETVPWGPSIACSTPAAIEWVEQWKASNDPSGRFISSHDSAATDHTAVSRRWPTAAARPANGTVNGKDVPVPIAV.

The active-site For GATase activity is C2. A Glutamine amidotransferase type-2 domain is found at 2–185; it reads CGILAVLGVV…PGHLYSSKTG (184 aa). Residues 50 to 54, 75 to 77, and D98 each bind L-glutamine; these read RLAII and NGE. Residues 193-516 form the Asparagine synthetase domain; that stretch reads PPWFSETVPS…PQDSARETVP (324 aa). Residues L231, I267, and 341 to 342 each bind ATP; that span reads SG.

The catalysed reaction is L-aspartate + L-glutamine + ATP + H2O = L-asparagine + L-glutamate + AMP + diphosphate + H(+). It functions in the pathway amino-acid biosynthesis; L-asparagine biosynthesis; L-asparagine from L-aspartate (L-Gln route): step 1/1. Its function is as follows. Essential for nitrogen assimilation, distribution and remobilization within the plant via the phloem. In Zea mays (Maize), this protein is Asparagine synthetase [glutamine-hydrolyzing] (ASN1).